Here is a 491-residue protein sequence, read N- to C-terminus: Probable ribonuclease FAU-1 (491 aa).

The protein belongs to the FAU-1 family.

In terms of biological role, probable RNase involved in rRNA stability through maturation and/or degradation of precursor rRNAs. Binds to RNA in loop regions with AU-rich sequences. The chain is Probable ribonuclease FAU-1 from Thermofilum pendens (strain DSM 2475 / Hrk 5).